The sequence spans 41 residues: Divisome-associated membrane protein Blr (41 aa).

The Cytoplasmic segment spans residues 1-3 (MNR). Residues 4–24 (LIELTGWIVLVVSVILLGVAS) traverse the membrane as a helical segment. Residues 25–41 (HIDNYQPPEQSASVQHK) lie on the Periplasmic side of the membrane.

Interacts with FtsL and several other divisomal proteins, including FtsI, FtsK, FtsN, FtsQ, FtsW and YmgF. In terms of processing, the N-terminus is blocked.

The protein resides in the cell inner membrane. Its function is as follows. Component of the cell division machinery, which is probably involved in the stabilization of the divisome under certain stress conditions. This is Divisome-associated membrane protein Blr (blr) from Escherichia coli (strain K12).